A 396-amino-acid chain; its full sequence is Putative carbamoyltransferase YgeW (396 aa).

Residues 71-74 (STRT), glutamine 98, 165-168 (HPTQ), and 330-331 (CL) each bind carbamoyl phosphate.

The protein belongs to the aspartate/ornithine carbamoyltransferase superfamily. As to quaternary structure, homotrimer.

This chain is Putative carbamoyltransferase YgeW (ygeW), found in Escherichia coli O6:H1 (strain CFT073 / ATCC 700928 / UPEC).